The primary structure comprises 83 residues: uncharacterized protein (83 aa).

This sequence belongs to the chlamydial CPn_0711/CT_665/TC_0036 family.

This is an uncharacterized protein from Chlamydia trachomatis serovar D (strain ATCC VR-885 / DSM 19411 / UW-3/Cx).